Consider the following 2026-residue polypeptide: E3 ubiquitin-protein ligase TRIP12 (2026 aa).

Polar residues-rich tracts occupy residues 1–10 (MSNRPNSNPG), 32–42 (GRNSLSLSVGS), and 73–84 (SSVSEPNITFSP). The disordered stretch occupies residues 1–437 (MSNRPNSNPG…SGESESDDSE (437 aa)). 4 stretches are compositionally biased toward low complexity: residues 94–112 (SSHFSDSSASGPSAPAISP), 135–161 (AEPAPARALSKKSSSYPGPSGASSTPS), 171–188 (LLSSSSSSSLPSSSSAAG), and 199–241 (AAKP…SSAA). Positions 359–371 (QKTTGSCASTSRR) are enriched in polar residues. Positions 379-391 (GAAEARRQEKMAD) are enriched in basic and acidic residues. A compositionally biased stretch (polar residues) spans 392–404 (SDNNQDGANSSAA). Over residues 412 to 430 (GASASSSVAGAVGMTTSGE) the composition is skewed to low complexity. The region spanning 789–876 (MLKKGSAQTT…DPELAKCFIK (88 aa)) is the WWE domain. Disordered regions lie at residues 1008 to 1123 (SNVT…SVSN) and 1441 to 1470 (GCKDAVGGKRGRAQTAPTKTSPRNAKKQDE). The segment covering 1040 to 1053 (KRKRLPKRGPRRPK) has biased composition (basic residues). Basic and acidic residues predominate over residues 1056-1065 (PPRDDDKVDN). The segment covering 1068–1079 (KSPTTTQSPKSS) has biased composition (low complexity). Polar residues predominate over residues 1094–1104 (TQANSANSEPS). The tract at residues 1530–1604 (EIIPTGEFIN…AMQRLLDTNP (75 aa)) is K-box. The 108-residue stretch at 1919–2026 (PDHGYTHDSR…REGQQSFHLS (108 aa)) folds into the HECT domain. Cys1993 acts as the Glycyl thioester intermediate in catalysis.

Belongs to the UPL family. K-HECT subfamily.

The protein resides in the nucleus. It localises to the nucleoplasm. It carries out the reaction S-ubiquitinyl-[E2 ubiquitin-conjugating enzyme]-L-cysteine + [acceptor protein]-L-lysine = [E2 ubiquitin-conjugating enzyme]-L-cysteine + N(6)-ubiquitinyl-[acceptor protein]-L-lysine.. It participates in protein modification; protein ubiquitination. Its function is as follows. E3 ubiquitin-protein ligase involved in ubiquitin fusion degradation (UFD) pathway and regulation of DNA repair. Part of the ubiquitin fusion degradation (UFD) pathway, a process that mediates ubiquitination of protein at their N-terminus, regardless of the presence of lysine residues in target proteins. Acts as a key regulator of DNA damage response by acting as a suppressor of RNF168, an E3 ubiquitin-protein ligase that promotes accumulation of 'Lys-63'-linked histone H2A and H2AX at DNA damage sites, thereby acting as a guard against excessive spreading of ubiquitinated chromatin at damaged chromosomes. This is E3 ubiquitin-protein ligase TRIP12 (trip12) from Danio rerio (Zebrafish).